The following is a 384-amino-acid chain: Chaperone protein DnaJ (384 aa).

A J domain is found at 5-70 (DYYEILGVTR…QKKRIYDTYG (66 aa)). Residues 134-212 (GTEKEIRLQT…CNGQGRTRQS (79 aa)) form a CR-type zinc finger. Zn(2+) contacts are provided by Cys-147, Cys-150, Cys-164, Cys-167, Cys-186, Cys-189, Cys-200, and Cys-203. CXXCXGXG motif repeat units lie at residues 147-154 (CEECNGSG), 164-171 (CPVCQGSG), 186-193 (CTRCQGMG), and 200-207 (CKTCNGQG). Positions 352–384 (KEKSGEKVRKWPWSKRKDREKKSMAESTREART) are disordered.

This sequence belongs to the DnaJ family. Homodimer. Zn(2+) serves as cofactor.

It is found in the cytoplasm. Functionally, participates actively in the response to hyperosmotic and heat shock by preventing the aggregation of stress-denatured proteins and by disaggregating proteins, also in an autonomous, DnaK-independent fashion. Unfolded proteins bind initially to DnaJ; upon interaction with the DnaJ-bound protein, DnaK hydrolyzes its bound ATP, resulting in the formation of a stable complex. GrpE releases ADP from DnaK; ATP binding to DnaK triggers the release of the substrate protein, thus completing the reaction cycle. Several rounds of ATP-dependent interactions between DnaJ, DnaK and GrpE are required for fully efficient folding. Also involved, together with DnaK and GrpE, in the DNA replication of plasmids through activation of initiation proteins. The sequence is that of Chaperone protein DnaJ from Syntrophobacter fumaroxidans (strain DSM 10017 / MPOB).